A 522-amino-acid polypeptide reads, in one-letter code: DEAD-box ATP-dependent RNA helicase 1 (522 aa).

A Q motif motif is present at residues Cys-30–Val-59. The region spanning Ile-66–Met-297 is the Helicase ATP-binding domain. Position 79 to 86 (Ser-79 to Thr-86) interacts with ATP. A DEAD box motif is present at residues Asp-207–Asp-210. One can recognise a Helicase C-terminal domain in the interval Tyr-325–Ile-475. The interval Val-490–Ala-522 is disordered. The segment covering Lys-497–Ser-506 has biased composition (basic residues).

It belongs to the DEAD box helicase family. DDX51/DBP6 subfamily.

The catalysed reaction is ATP + H2O = ADP + phosphate + H(+). This chain is DEAD-box ATP-dependent RNA helicase 1 (RH1), found in Arabidopsis thaliana (Mouse-ear cress).